The following is a 413-amino-acid chain: Glucose-1-phosphate adenylyltransferase (413 aa).

Alpha-D-glucose 1-phosphate-binding positions include glycine 161, 176–177 (EK), and serine 195.

The protein belongs to the bacterial/plant glucose-1-phosphate adenylyltransferase family. As to quaternary structure, homotetramer.

The enzyme catalyses alpha-D-glucose 1-phosphate + ATP + H(+) = ADP-alpha-D-glucose + diphosphate. It participates in glycan biosynthesis; glycogen biosynthesis. Its function is as follows. Involved in the biosynthesis of ADP-glucose, a building block required for the elongation reactions to produce glycogen. Catalyzes the reaction between ATP and alpha-D-glucose 1-phosphate (G1P) to produce pyrophosphate and ADP-Glc. The sequence is that of Glucose-1-phosphate adenylyltransferase from Anaeromyxobacter dehalogenans (strain 2CP-C).